Reading from the N-terminus, the 382-residue chain is GDP-mannose transporter (382 aa).

Topologically, residues 1 to 40 (MADDKKTNEYTIEMDKLDHGNKDFEAPAPAVRPRGPPVAQ) are cytoplasmic. The chain crosses the membrane as a helical span at residues 41–61 (LANNPILPVLAYCGSSILMTV). The Lumenal segment spans residues 62–71 (MNKYVLSGRD). The helical transmembrane segment at 72 to 92 (FNLNFFLLCVQSIVCIVAIQT) threads the bilayer. Over 93–110 (CKVSKLITYRDFNSDEAK) the chain is Cytoplasmic. The helical transmembrane segment at 111–127 (KWFPITLLLIGMIYTGS) threads the bilayer. At 128–134 (KALQYLS) the chain is on the lumenal side. A helical transmembrane segment spans residues 135-151 (IPVYTIFKNLTIILIAY). The Cytoplasmic segment spans residues 152-160 (GEVLWFGGS). The chain crosses the membrane as a helical span at residues 161–182 (VTGLTLFSFGLMVLSSIIAAWA). The Lumenal segment spans residues 183–200 (DIKHAVESSGDATAKVST). Residues 201 to 221 (LNAGYIWMLINCLCTSSYVLG) form a helical membrane-spanning segment. At 222-233 (MRKRIKLTNFKD) the chain is on the cytoplasmic side. The helical transmembrane segment at 234 to 254 (FDTMFYNNLLSIPVLLVLTFL) threads the bilayer. The Lumenal segment spans residues 255–274 (MEDWSSANIARNFPSTDRNG). Residues 275 to 295 (ILFAMILSGLSSVFISYTSAW) form a helical membrane-spanning segment. At 296–303 (CVRVTSST) the chain is on the cytoplasmic side. A helical transmembrane segment spans residues 304 to 324 (TYSMVGALNKLPIALSGLIFF). At 325–327 (DAP) the chain is on the lumenal side. Residues 328-348 (VTFPSVSAIVVGFISGIVYAV) form a helical membrane-spanning segment. The Cytoplasmic segment spans residues 349 to 382 (AKIKQSAKPKTGVLPMSNPPVSASSQSMRDSLRS). Positions 358–382 (KTGVLPMSNPPVSASSQSMRDSLRS) are disordered. A compositionally biased stretch (polar residues) spans 367–382 (PPVSASSQSMRDSLRS).

Belongs to the TPT transporter family. SLC35D subfamily. Homooligomer.

The protein resides in the golgi apparatus membrane. It localises to the cytoplasmic vesicle membrane. Its subcellular location is the endoplasmic reticulum membrane. Its function is as follows. Involved in the import of GDP-mannose from the cytoplasm into the Golgi lumen. The sequence is that of GDP-mannose transporter (gmt1) from Aspergillus fumigatus (strain CBS 144.89 / FGSC A1163 / CEA10) (Neosartorya fumigata).